Consider the following 354-residue polypeptide: UPF0283 membrane protein HI_0043 (354 aa).

The next 3 membrane-spanning stretches (helical) occupy residues Leu57–Ile77, Ile87–Ile107, and Glu211–Trp231.

Belongs to the UPF0283 family.

It is found in the cell inner membrane. The sequence is that of UPF0283 membrane protein HI_0043 from Haemophilus influenzae (strain ATCC 51907 / DSM 11121 / KW20 / Rd).